A 293-amino-acid chain; its full sequence is ELMO domain-containing protein 2 (293 aa).

Positions 126 to 282 (QHEKLLIKLW…KFHEKIKGLL (157 aa)) constitute an ELMO domain.

Its function is as follows. Acts as a GTPase-activating protein (GAP) toward guanine nucleotide exchange factors like ARL2, ARL3, ARF1 and ARF6, but not for GTPases outside the Arf family. The chain is ELMO domain-containing protein 2 (ELMOD2) from Bos taurus (Bovine).